Reading from the N-terminus, the 119-residue chain is Ribonuclease pancreatic (119 aa).

The residue at position 1 (Q1) is a Pyrrolidone carboxylic acid. H10 acts as the Proton acceptor in catalysis. Disulfide bonds link C25/C80, C39/C91, and C57/C106. 40 to 44 (KTRNT) serves as a coordination point for substrate. The active-site Proton donor is H113.

It belongs to the pancreatic ribonuclease family. As to quaternary structure, monomer. Interacts with and forms tight 1:1 complexes with RNH1. Dimerization of two such complexes may occur. Interaction with RNH1 inhibits this protein. Pancreas.

Its subcellular location is the secreted. The catalysed reaction is an [RNA] containing cytidine + H2O = an [RNA]-3'-cytidine-3'-phosphate + a 5'-hydroxy-ribonucleotide-3'-[RNA].. It carries out the reaction an [RNA] containing uridine + H2O = an [RNA]-3'-uridine-3'-phosphate + a 5'-hydroxy-ribonucleotide-3'-[RNA].. In terms of biological role, endonuclease that catalyzes the cleavage of RNA on the 3' side of pyrimidine nucleotides. Acts on single-stranded and double-stranded RNA. The chain is Ribonuclease pancreatic from Iguana iguana (Common iguana).